The chain runs to 397 residues: MALTPTREDKFSFGLWTIGYTGADPFGGPTRSDLDVVEGVERISELGAYGLTFHDDDLFAFGSTDAERQTQIDRLKGALSDTGIVVPMVTTNLFSAPVFKDGGFTSNDRAVRRFAIRKVLRNIDLAAELGAKTFVMWGGREGAEYDSAKDVRGALERYREAVNLLGDYVTDKGYDIRFAIEPKPNEPRGDILLPTLGHALAFIETLERPELVGVNPEVGHEQMAGLNFTAGIMQALYQGKLFHIDLNGQRGIKYDQDLVFGHGDLQNAFSLVDLLENGGVGGGRSYDGPRHFDYKPSRTEDITGVWDSAAANMRMYLLLKERAQAFRADPEVQEALAAAKVAEIDTPTLNEGESYDDILADRSSYEDFAADEYFDAKGFGFVRLNQLALEHLMGARS.

Catalysis depends on residues His-54 and Asp-57. 7 residues coordinate Mg(2+): Glu-181, Glu-217, His-220, Asp-245, Asp-255, Asp-257, and Asp-293.

The protein belongs to the xylose isomerase family. Homotetramer. Requires Mg(2+) as cofactor.

Its subcellular location is the cytoplasm. It catalyses the reaction alpha-D-xylose = alpha-D-xylulofuranose. This Clavibacter sepedonicus (Clavibacter michiganensis subsp. sepedonicus) protein is Xylose isomerase.